The chain runs to 542 residues: Probable quinate permease (542 aa).

The Cytoplasmic portion of the chain corresponds to methionine 1–tyrosine 22. A helical transmembrane segment spans residues leucine 23 to glycine 43. Topologically, residues threonine 44–serine 74 are extracellular. The helical transmembrane segment at cysteine 75–glycine 95 threads the bilayer. Residues arginine 96–lysine 97 lie on the Cytoplasmic side of the membrane. The helical transmembrane segment at tryptophan 98–asparagine 118 threads the bilayer. The Extracellular segment spans residues glycine 119–arginine 130. The helical transmembrane segment at valine 131–methionine 151 threads the bilayer. Topologically, residues alanine 152 to arginine 159 are cytoplasmic. The helical transmembrane segment at leucine 160–tyrosine 180 threads the bilayer. At glycine 181–tryptophan 193 the chain is on the extracellular side. Residues isoleucine 194–leucine 214 traverse the membrane as a helical segment. The Cytoplasmic portion of the chain corresponds to lysine 215–arginine 285. The helical transmembrane segment at leucine 286–tyrosine 306 threads the bilayer. The Extracellular portion of the chain corresponds to tyrosine 307–phenylalanine 325. A helical membrane pass occupies residues serine 326–isoleucine 346. Residues aspartate 347–arginine 352 are Cytoplasmic-facing. The helical transmembrane segment at leucine 353–isoleucine 373 threads the bilayer. Residues lysine 374 to threonine 387 are Extracellular-facing. The helical transmembrane segment at glycine 388–tryptophan 408 threads the bilayer. The Cytoplasmic segment spans residues asparagine 409–tyrosine 456. Residues glycine 457–valine 477 form a helical membrane-spanning segment. The Extracellular segment spans residues proline 478 to valine 542. The interval glycine 523–valine 542 is disordered. The segment covering glutamine 531 to valine 542 has biased composition (basic and acidic residues).

This sequence belongs to the major facilitator superfamily. Sugar transporter (TC 2.A.1.1) family. As to quaternary structure, interacts with creB. Ubiquitinated. Deubiquitinated by creB, probably to control its activity or amount.

Its subcellular location is the cell membrane. Its function is as follows. Integral membrane transporter that imports quinic acid to be catabolized as a carbon source. The chain is Probable quinate permease (qutD) from Aspergillus fumigatus (strain CBS 144.89 / FGSC A1163 / CEA10) (Neosartorya fumigata).